The primary structure comprises 103 residues: Putative RNA-binding protein RbpB (103 aa).

Residues 2–79 (SIYVGNLSYD…RDLKVNKAKP (78 aa)) enclose the RRM domain. The span at 74 to 85 (VNKAKPREDRGG) shows a compositional bias: basic and acidic residues. The tract at residues 74–103 (VNKAKPREDRGGSRGSFGGNRSNNNFRNRY) is disordered. The segment covering 92-103 (GNRSNNNFRNRY) has biased composition (low complexity).

The sequence is that of Putative RNA-binding protein RbpB (rbpB) from Nostoc sp. (strain PCC 7120 / SAG 25.82 / UTEX 2576).